The sequence spans 552 residues: Cilia- and flagella- associated protein 210 (552 aa).

Coiled-coil stretches lie at residues 53-143 (DEWK…NAKQ), 186-307 (EEQL…KKRL), 348-409 (IARD…VMKA), and 460-488 (TEAL…TTNK). Residues 216–238 (KDHLKQIKEHEEEEERRKKYEEK) are disordered.

As to quaternary structure, microtubule inner protein component of sperm flagellar doublet microtubules. Expressed in airway epithelial cells.

The protein resides in the cytoplasm. The protein localises to the cytoskeleton. It is found in the cilium axoneme. Its subcellular location is the flagellum axoneme. Microtubule inner protein (MIP) part of the dynein-decorated doublet microtubules (DMTs) in cilia axoneme, which is required for motile cilia beating. The sequence is that of Cilia- and flagella- associated protein 210 from Homo sapiens (Human).